A 423-amino-acid polypeptide reads, in one-letter code: UDP-N-acetylglucosamine 1-carboxyvinyltransferase 2 (423 aa).

23 to 24 provides a ligand contact to phosphoenolpyruvate; sequence KN. Arginine 93 serves as a coordination point for UDP-N-acetyl-alpha-D-glucosamine. Catalysis depends on cysteine 117, which acts as the Proton donor. Position 117 is a 2-(S-cysteinyl)pyruvic acid O-phosphothioketal (cysteine 117). Residues 122–126, aspartate 305, and isoleucine 327 each bind UDP-N-acetyl-alpha-D-glucosamine; that span reads RPIDQ.

Belongs to the EPSP synthase family. MurA subfamily.

Its subcellular location is the cytoplasm. It catalyses the reaction phosphoenolpyruvate + UDP-N-acetyl-alpha-D-glucosamine = UDP-N-acetyl-3-O-(1-carboxyvinyl)-alpha-D-glucosamine + phosphate. It functions in the pathway cell wall biogenesis; peptidoglycan biosynthesis. Functionally, cell wall formation. Adds enolpyruvyl to UDP-N-acetylglucosamine. The chain is UDP-N-acetylglucosamine 1-carboxyvinyltransferase 2 from Listeria monocytogenes serovar 1/2a (strain ATCC BAA-679 / EGD-e).